The sequence spans 161 residues: Cyclic pyranopterin monophosphate synthase (161 aa).

Residues 75–77 (LCH) and 113–114 (ME) contribute to the substrate site. Aspartate 128 is an active-site residue.

It belongs to the MoaC family. As to quaternary structure, homohexamer; trimer of dimers.

It carries out the reaction (8S)-3',8-cyclo-7,8-dihydroguanosine 5'-triphosphate = cyclic pyranopterin phosphate + diphosphate. The protein operates within cofactor biosynthesis; molybdopterin biosynthesis. Functionally, catalyzes the conversion of (8S)-3',8-cyclo-7,8-dihydroguanosine 5'-triphosphate to cyclic pyranopterin monophosphate (cPMP). The chain is Cyclic pyranopterin monophosphate synthase from Citrobacter koseri (strain ATCC BAA-895 / CDC 4225-83 / SGSC4696).